Reading from the N-terminus, the 538-residue chain is NAD(P)H-quinone oxidoreductase chain 4 1 (538 aa).

13 consecutive transmembrane segments (helical) span residues 7 to 27 (FPWL…IPII), 37 to 57 (WYGL…FWHY), 88 to 108 (LSMP…FAAW), 116 to 136 (LFYG…VAQD), 137 to 157 (LLLF…LISI), 170 to 190 (FILY…ALAF), 210 to 230 (AIEL…LPIF), 244 to 264 (SAPG…YALI), 278 to 298 (FAPV…CCAF), 315 to 335 (MGFV…GAVL), 336 to 356 (QMVS…VTYE), 388 to 408 (LALP…GIAT), and 418 to 438 (VVVV…LLSM).

Belongs to the complex I subunit 4 family.

The protein localises to the cellular thylakoid membrane. The enzyme catalyses a plastoquinone + NADH + (n+1) H(+)(in) = a plastoquinol + NAD(+) + n H(+)(out). It carries out the reaction a plastoquinone + NADPH + (n+1) H(+)(in) = a plastoquinol + NADP(+) + n H(+)(out). NDH-1 shuttles electrons from NAD(P)H, via FMN and iron-sulfur (Fe-S) centers, to quinones in the respiratory chain. The immediate electron acceptor for the enzyme in this species is believed to be plastoquinone. Couples the redox reaction to proton translocation (for every two electrons transferred, four hydrogen ions are translocated across the cytoplasmic membrane), and thus conserves the redox energy in a proton gradient. The protein is NAD(P)H-quinone oxidoreductase chain 4 1 of Nostoc sp. (strain PCC 7120 / SAG 25.82 / UTEX 2576).